The chain runs to 220 residues: Fructose-6-phosphate aldolase 1 (220 aa).

The active-site Schiff-base intermediate with substrate is lysine 85.

The protein belongs to the transaldolase family. Type 3A subfamily. As to quaternary structure, homodecamer.

It is found in the cytoplasm. The enzyme catalyses beta-D-fructose 6-phosphate = dihydroxyacetone + D-glyceraldehyde 3-phosphate. Its function is as follows. Catalyzes the reversible formation of fructose 6-phosphate from dihydroxyacetone and D-glyceraldehyde 3-phosphate via an aldolization reaction. The chain is Fructose-6-phosphate aldolase 1 (fsaA) from Escherichia coli O157:H7.